A 313-amino-acid chain; its full sequence is Ribose-phosphate pyrophosphokinase (313 aa).

Residues Asp37–Glu39 and Arg96–Gln97 contribute to the ATP site. Mg(2+)-binding residues include His131 and Asp170. Lys193 is a catalytic residue. Residues Arg195, Asp219, and Asp223–Thr227 contribute to the D-ribose 5-phosphate site.

The protein belongs to the ribose-phosphate pyrophosphokinase family. Class I subfamily. Homohexamer. Requires Mg(2+) as cofactor.

The protein localises to the cytoplasm. The enzyme catalyses D-ribose 5-phosphate + ATP = 5-phospho-alpha-D-ribose 1-diphosphate + AMP + H(+). It participates in metabolic intermediate biosynthesis; 5-phospho-alpha-D-ribose 1-diphosphate biosynthesis; 5-phospho-alpha-D-ribose 1-diphosphate from D-ribose 5-phosphate (route I): step 1/1. Its function is as follows. Involved in the biosynthesis of the central metabolite phospho-alpha-D-ribosyl-1-pyrophosphate (PRPP) via the transfer of pyrophosphoryl group from ATP to 1-hydroxyl of ribose-5-phosphate (Rib-5-P). The protein is Ribose-phosphate pyrophosphokinase of Pseudomonas putida (strain ATCC 47054 / DSM 6125 / CFBP 8728 / NCIMB 11950 / KT2440).